We begin with the raw amino-acid sequence, 127 residues long: Small ribosomal subunit protein bS6 (127 aa).

Residues 96 to 127 (VTTPSPMMKEEKSRSLTPAAGDEGKPAEAAEA) are disordered. Over residues 117–127 (DEGKPAEAAEA) the composition is skewed to basic and acidic residues.

The protein belongs to the bacterial ribosomal protein bS6 family.

Binds together with bS18 to 16S ribosomal RNA. In Azoarcus sp. (strain BH72), this protein is Small ribosomal subunit protein bS6.